The primary structure comprises 171 residues: Translationally-controlled tumor protein homolog (171 aa).

The TCTP domain maps to 1 to 171 (MIIYRDCISQ…FKDGLEMEKC (171 aa)).

This sequence belongs to the TCTP family. As to expression, expressed by the venom gland.

The protein resides in the secreted. In terms of biological role, venom protein that causes edema, enhances vascular permeability and is likely related to the inflammatory activity of the venom. This chain is Translationally-controlled tumor protein homolog, found in Micrurus fulvius (Eastern coral snake).